The chain runs to 213 residues: Orotate phosphoribosyltransferase (213 aa).

Position 26 (Lys26) interacts with 5-phospho-alpha-D-ribose 1-diphosphate. 34–35 (FF) contacts orotate. 5-phospho-alpha-D-ribose 1-diphosphate contacts are provided by residues 72–73 (YK), Arg99, Lys100, Lys103, His105, and 124–132 (DDVITAGTA). Orotate-binding residues include Thr128 and Arg156.

It belongs to the purine/pyrimidine phosphoribosyltransferase family. PyrE subfamily. Homodimer. Requires Mg(2+) as cofactor.

It carries out the reaction orotidine 5'-phosphate + diphosphate = orotate + 5-phospho-alpha-D-ribose 1-diphosphate. It functions in the pathway pyrimidine metabolism; UMP biosynthesis via de novo pathway; UMP from orotate: step 1/2. In terms of biological role, catalyzes the transfer of a ribosyl phosphate group from 5-phosphoribose 1-diphosphate to orotate, leading to the formation of orotidine monophosphate (OMP). This Alteromonas mediterranea (strain DSM 17117 / CIP 110805 / LMG 28347 / Deep ecotype) protein is Orotate phosphoribosyltransferase.